We begin with the raw amino-acid sequence, 483 residues long: PRAME family member 12 (483 aa).

The LRR 1; degenerate repeat unit spans residues 97–122 (RWKLQVLDLRNVDENFWGIWSGASAL). One copy of the LRR 2; degenerate repeat lies at 177–201 (HVCCKELQIFGIAIHRIIEVLNTVE). Residues 202–228 (LDCIQEVEVCCPWELSILIRFAPYLGQ) form an LRR 3; degenerate repeat. Residues 229–264 (MRNLRKLVLFNIHVSACIPLDRKEQFVIQFTSQFLK) form an LRR 4; degenerate repeat. 5 LRR repeats span residues 265 to 290 (LDYF…LRCL), 291 to 322 (QAPL…RQLK), 323 to 341 (ELDL…PLSV), 347 to 374 (EATL…ALSR), and 375 to 399 (CSQL…LLRH).

Belongs to the PRAME family.

In Homo sapiens (Human), this protein is PRAME family member 12.